A 198-amino-acid chain; its full sequence is HTH-type transcriptional regulator BetI (198 aa).

The HTH tetR-type domain maps to 8–68 (PIRRQQLIEA…ATMRYLIRHL (61 aa)). The H-T-H motif DNA-binding region spans 31 to 50 (SIAQIAKRAGVSNGIISHYF).

The protein operates within amine and polyamine biosynthesis; betaine biosynthesis via choline pathway [regulation]. In terms of biological role, repressor involved in the biosynthesis of the osmoprotectant glycine betaine. It represses transcription of the choline transporter BetT and the genes of BetAB involved in the synthesis of glycine betaine. This chain is HTH-type transcriptional regulator BetI, found in Yersinia pseudotuberculosis serotype O:1b (strain IP 31758).